The following is a 1682-amino-acid chain: Calmodulin-binding transcription activator 1 (1682 aa).

The segment at residues 63–188 is a DNA-binding region (CG-1); it reads KCSSLPKERH…YLNVPAIEDC (126 aa). The short motif at 112–119 is the Nuclear localization signal element; sequence RKKVKYRK. 2 disordered regions span residues 284–375 and 599–622; these read RIIS…MVDS and SSFS…FLQD. Over residues 302-327 the composition is skewed to basic and acidic residues; that stretch reads EVQHNDVSEGKHEPSHGRSTSREKRN. Polar residues-rich tracts occupy residues 337-367 and 599-618; these read HQNS…SGLN and SSFS…SPSF. The region spanning 877–955 is the IPT/TIG domain; that stretch reads DYSPEWSYPE…ISNSVVFEYK (79 aa). The disordered stretch occupies residues 992–1020; the sequence is MAEMTGSQQHKQASGGGGSGSGSGSGAGG. Residues 1005–1020 are compositionally biased toward gly residues; it reads SGGGGSGSGSGSGAGG. ANK repeat units lie at residues 1066-1095, 1111-1141, and 1145-1174; these read RGMT…KHAD, FSCT…AISI, and LGRL…DEQA. 2 disordered regions span residues 1217 to 1249 and 1267 to 1318; these read ASTN…KKHK and LSLE…SASQ. The span at 1268–1291 shows a compositional bias: polar residues; sequence SLEQPNIRKQSPRSKQPSPETISP. Residues 1308–1318 are compositionally biased toward low complexity; the sequence is ETAASQASASQ. 3 consecutive IQ domains span residues 1549 to 1585, 1586 to 1608, and 1609 to 1631; these read QEVA…AAIL, IQSK…AAVL, and IQNF…TAVI.

It belongs to the CAMTA family. May interact with calmodulin.

The protein resides in the nucleus. Its subcellular location is the cytoplasm. Functionally, transcriptional activator. The sequence is that of Calmodulin-binding transcription activator 1 from Mus musculus (Mouse).